The following is a 245-amino-acid chain: Ribosomal RNA small subunit methyltransferase G (245 aa).

S-adenosyl-L-methionine-binding positions include Gly90, Leu95, 140–141, and Arg158; that span reads AE. The interval 223–245 is disordered; the sequence is VVSARRAKPPHPKSARTGKAGTR. Positions 227-245 are enriched in basic residues; it reads RRAKPPHPKSARTGKAGTR.

Belongs to the methyltransferase superfamily. RNA methyltransferase RsmG family.

It localises to the cytoplasm. Its function is as follows. Specifically methylates the N7 position of guanine in position 518 of 16S rRNA. The sequence is that of Ribosomal RNA small subunit methyltransferase G from Mycobacterium avium (strain 104).